Consider the following 500-residue polypeptide: Probable cytosol aminopeptidase (500 aa).

K264 and D269 together coordinate Mn(2+). K276 is a catalytic residue. Mn(2+)-binding residues include D287, D346, and E348. The active site involves R350.

This sequence belongs to the peptidase M17 family. The cofactor is Mn(2+).

Its subcellular location is the cytoplasm. It carries out the reaction Release of an N-terminal amino acid, Xaa-|-Yaa-, in which Xaa is preferably Leu, but may be other amino acids including Pro although not Arg or Lys, and Yaa may be Pro. Amino acid amides and methyl esters are also readily hydrolyzed, but rates on arylamides are exceedingly low.. The enzyme catalyses Release of an N-terminal amino acid, preferentially leucine, but not glutamic or aspartic acids.. Its function is as follows. Presumably involved in the processing and regular turnover of intracellular proteins. Catalyzes the removal of unsubstituted N-terminal amino acids from various peptides. The protein is Probable cytosol aminopeptidase of Chlamydia abortus (strain DSM 27085 / S26/3) (Chlamydophila abortus).